The following is a 324-amino-acid chain: Acetyl-coenzyme A carboxylase carboxyl transferase subunit alpha (324 aa).

In terms of domain architecture, CoA carboxyltransferase C-terminal spans 37 to 291; it reads KLERRLDKLK…QNFILQEWLR (255 aa).

Belongs to the AccA family. As to quaternary structure, acetyl-CoA carboxylase is a heterohexamer composed of biotin carboxyl carrier protein (AccB), biotin carboxylase (AccC) and two subunits each of ACCase subunit alpha (AccA) and ACCase subunit beta (AccD).

The protein resides in the cytoplasm. It catalyses the reaction N(6)-carboxybiotinyl-L-lysyl-[protein] + acetyl-CoA = N(6)-biotinyl-L-lysyl-[protein] + malonyl-CoA. Its pathway is lipid metabolism; malonyl-CoA biosynthesis; malonyl-CoA from acetyl-CoA: step 1/1. Its function is as follows. Component of the acetyl coenzyme A carboxylase (ACC) complex. First, biotin carboxylase catalyzes the carboxylation of biotin on its carrier protein (BCCP) and then the CO(2) group is transferred by the carboxyltransferase to acetyl-CoA to form malonyl-CoA. In Chlamydia caviae (strain ATCC VR-813 / DSM 19441 / 03DC25 / GPIC) (Chlamydophila caviae), this protein is Acetyl-coenzyme A carboxylase carboxyl transferase subunit alpha.